We begin with the raw amino-acid sequence, 239 residues long: Sugar fermentation stimulation protein homolog (239 aa).

The protein belongs to the SfsA family.

The protein is Sugar fermentation stimulation protein homolog of Shewanella woodyi (strain ATCC 51908 / MS32).